Here is a 158-residue protein sequence, read N- to C-terminus: NAD(P)H-quinone oxidoreductase subunit N (158 aa).

This sequence belongs to the complex I NdhN subunit family. In terms of assembly, NDH-1 can be composed of about 15 different subunits; different subcomplexes with different compositions have been identified which probably have different functions.

Its subcellular location is the cellular thylakoid membrane. The enzyme catalyses a plastoquinone + NADH + (n+1) H(+)(in) = a plastoquinol + NAD(+) + n H(+)(out). It carries out the reaction a plastoquinone + NADPH + (n+1) H(+)(in) = a plastoquinol + NADP(+) + n H(+)(out). Functionally, NDH-1 shuttles electrons from an unknown electron donor, via FMN and iron-sulfur (Fe-S) centers, to quinones in the respiratory and/or the photosynthetic chain. The immediate electron acceptor for the enzyme in this species is believed to be plastoquinone. Couples the redox reaction to proton translocation, and thus conserves the redox energy in a proton gradient. Cyanobacterial NDH-1 also plays a role in inorganic carbon-concentration. In Nostoc punctiforme (strain ATCC 29133 / PCC 73102), this protein is NAD(P)H-quinone oxidoreductase subunit N.